Reading from the N-terminus, the 241-residue chain is Spiralin (241 aa).

Residues 1 to 23 (MKKLLSILAVFGVSAVGTTSVVA) form the signal peptide. Cys-24 is lipidated: N-palmitoyl cysteine. Cys-24 carries S-diacylglycerol cysteine lipidation.

The protein belongs to the spiralin family. As to quaternary structure, seems to occur as dimer, tetramers, and large oligomers of identical chains. In terms of processing, palmitate and stearate are the major lipid components.

The protein resides in the cell membrane. Its function is as follows. Major membrane protein of spiroplasma. The protein is Spiralin (spi) of Spiroplasma citri.